We begin with the raw amino-acid sequence, 1163 residues long: Carbamoyl phosphate synthase large chain (1163 aa).

A carboxyphosphate synthetic domain region spans residues 1-456; the sequence is MPKRQDIKSI…SLQKALRGLE (456 aa). Position 129 (arginine 129) interacts with ATP. A disordered region spans residues 148–170; it reads LANATDIKDHDRKSHEAERSALK. The segment covering 153-170 has biased composition (basic and acidic residues); the sequence is DIKDHDRKSHEAERSALK. The region spanning 185 to 381 is the ATP-grasp 1 domain; the sequence is LENQWNLGEG…IAKIAAKLAV (197 aa). The ATP site is built by arginine 222, glycine 228, glycine 229, glutamate 261, valine 263, glutamate 268, glycine 294, valine 295, histidine 296, glutamine 338, and glutamate 352. Mg(2+) is bound by residues glutamine 338, glutamate 352, and asparagine 354. 3 residues coordinate Mn(2+): glutamine 338, glutamate 352, and asparagine 354. Residues 457-614 form an oligomerization domain region; it reads TGLTGLDEIE…PFVGAARSEA (158 aa). A carbamoyl phosphate synthetic domain region spans residues 615-1026; it reads QVSDRKKVVI…AFAKSQLGAG (412 aa). One can recognise an ATP-grasp 2 domain in the interval 743 to 955; that stretch reads QKLLMKLDLN…IAKIAARVMA (213 aa). Residues arginine 779, serine 839, leucine 841, glutamate 846, glycine 871, isoleucine 872, histidine 873, serine 874, glutamine 914, and glutamate 926 each contribute to the ATP site. Mg(2+)-binding residues include glutamine 914, glutamate 926, and asparagine 928. Residues glutamine 914, glutamate 926, and asparagine 928 each coordinate Mn(2+). One can recognise an MGS-like domain in the interval 1027–1163; that stretch reads VDLPRDGTVF…VRPLQSYFET (137 aa). The tract at residues 1027–1163 is allosteric domain; that stretch reads VDLPRDGTVF…VRPLQSYFET (137 aa).

It belongs to the CarB family. In terms of assembly, composed of two chains; the small (or glutamine) chain promotes the hydrolysis of glutamine to ammonia, which is used by the large (or ammonia) chain to synthesize carbamoyl phosphate. Tetramer of heterodimers (alpha,beta)4. Requires Mg(2+) as cofactor. Mn(2+) serves as cofactor.

It carries out the reaction hydrogencarbonate + L-glutamine + 2 ATP + H2O = carbamoyl phosphate + L-glutamate + 2 ADP + phosphate + 2 H(+). The enzyme catalyses hydrogencarbonate + NH4(+) + 2 ATP = carbamoyl phosphate + 2 ADP + phosphate + 2 H(+). It functions in the pathway amino-acid biosynthesis; L-arginine biosynthesis; carbamoyl phosphate from bicarbonate: step 1/1. It participates in pyrimidine metabolism; UMP biosynthesis via de novo pathway; (S)-dihydroorotate from bicarbonate: step 1/3. In terms of biological role, large subunit of the glutamine-dependent carbamoyl phosphate synthetase (CPSase). CPSase catalyzes the formation of carbamoyl phosphate from the ammonia moiety of glutamine, carbonate, and phosphate donated by ATP, constituting the first step of 2 biosynthetic pathways, one leading to arginine and/or urea and the other to pyrimidine nucleotides. The large subunit (synthetase) binds the substrates ammonia (free or transferred from glutamine from the small subunit), hydrogencarbonate and ATP and carries out an ATP-coupled ligase reaction, activating hydrogencarbonate by forming carboxy phosphate which reacts with ammonia to form carbamoyl phosphate. In Rhizobium meliloti (strain 1021) (Ensifer meliloti), this protein is Carbamoyl phosphate synthase large chain.